Here is a 159-residue protein sequence, read N- to C-terminus: MNITIISVGKIKEKYLSDAINEYSKRISRYSKLDIIEVADEKTPESPSDVEKSKILEKEAERILKHLKKDSFVITLEILGKEVTSESLAKKINDLSISGKSDITFIIGGSLGLSKNISEISDFKLSFSKMTFPHQLMRVILLEQIYRSFRIINGEPYHK.

S-adenosyl-L-methionine is bound by residues Leu-76, Gly-108, and 127–132; that span reads FSKMTF.

This sequence belongs to the RNA methyltransferase RlmH family.

The protein localises to the cytoplasm. It catalyses the reaction pseudouridine(1915) in 23S rRNA + S-adenosyl-L-methionine = N(3)-methylpseudouridine(1915) in 23S rRNA + S-adenosyl-L-homocysteine + H(+). Specifically methylates the pseudouridine at position 1915 (m3Psi1915) in 23S rRNA. The chain is Putative ribosomal RNA large subunit methyltransferase H from Methanococcus maripaludis (strain C5 / ATCC BAA-1333).